The sequence spans 93 residues: Cell division protein CrgA (93 aa).

The next 2 helical transmembrane spans lie at 31–51 (VWFVTLFVGLMLIGLVWLMVF) and 70–90 (LGPWNYAIAFAFMITGLLLTM).

The protein belongs to the CrgA family.

Its subcellular location is the cell membrane. In terms of biological role, involved in cell division. In Mycobacterium leprae (strain Br4923), this protein is Cell division protein CrgA.